We begin with the raw amino-acid sequence, 226 residues long: UPF0758 protein M6_Spy0838 (226 aa).

An MPN domain is found at 103 to 225 (SVLTSVQVAE…YYSFREKSTL (123 aa)). Zn(2+) is bound by residues His174, His176, and Asp187. Residues 174–187 (HNHPSGNIEPSSND) carry the JAMM motif motif.

This sequence belongs to the UPF0758 family.

This Streptococcus pyogenes serotype M6 (strain ATCC BAA-946 / MGAS10394) protein is UPF0758 protein M6_Spy0838.